The following is a 269-amino-acid chain: Expansin-B1 (269 aa).

An N-terminal signal peptide occupies residues 1 to 24 (MGSLANNIMVVGAVLAALVAGGSC). Residue N34 is glycosylated (N-linked (GlcNAc...) asparagine). In terms of domain architecture, Expansin-like EG45 spans 63–169 (GGACGIKNVN…RRVRCKYPAG (107 aa)). 3 disulfide bridges follow: C66–C94, C97–C164, and C102–C108. An Expansin-like CBD domain is found at 183 to 264 (NYLAVLVKYV…NWRPDAVYTS (82 aa)).

It belongs to the expansin family. Expansin B subfamily. Expressed in anthers and pollen.

It is found in the secreted. Its subcellular location is the cell wall. It localises to the membrane. Its function is as follows. May aid fertilization by loosening the cell wall of the stigma and style, thereby facilitating penetration of the pollen tube. Acts selectively on grass cell walls, which are relatively poor in pectins and xyloglucans and rich in glucuronoarabinoxylans and (1-3),(1-4)-beta-D-glucans, when compared with cell walls of other angiosperms, including other monocots. This Zea mays (Maize) protein is Expansin-B1 (EXPB1).